We begin with the raw amino-acid sequence, 710 residues long: Integrator complex subunit 10 (710 aa).

Residues serine 231, serine 381, and serine 382 each carry the phosphoserine modification. Residue lysine 464 forms a Glycyl lysine isopeptide (Lys-Gly) (interchain with G-Cter in SUMO2) linkage.

This sequence belongs to the Integrator subunit 10 family. Component of the Integrator complex, composed of core subunits INTS1, INTS2, INTS3, INTS4, INTS5, INTS6, INTS7, INTS8, INTS9/RC74, INTS10, INTS11/CPSF3L, INTS12, INTS13, INTS14 and INTS15. The core complex associates with protein phosphatase 2A subunits PPP2CA and PPP2R1A, to form the Integrator-PP2A (INTAC) complex. INTS10 is part of the tail subcomplex, composed of INTS10, INTS13, INTS14 and INTS15.

It localises to the nucleus. Functionally, component of the integrator complex, a multiprotein complex that terminates RNA polymerase II (Pol II) transcription in the promoter-proximal region of genes. The integrator complex provides a quality checkpoint during transcription elongation by driving premature transcription termination of transcripts that are unfavorably configured for transcriptional elongation: the complex terminates transcription by (1) catalyzing dephosphorylation of the C-terminal domain (CTD) of Pol II subunit POLR2A/RPB1 and SUPT5H/SPT5, (2) degrading the exiting nascent RNA transcript via endonuclease activity and (3) promoting the release of Pol II from bound DNA. The integrator complex is also involved in terminating the synthesis of non-coding Pol II transcripts, such as enhancer RNAs (eRNAs), small nuclear RNAs (snRNAs), telomerase RNAs and long non-coding RNAs (lncRNAs). Within the integrator complex, INTS10 is part of the integrator tail module that acts as a platform for the recruitment of transcription factors at promoters. May be not involved in the recruitment of cytoplasmic dynein to the nuclear envelope, probably as component of the integrator complex. This Mus musculus (Mouse) protein is Integrator complex subunit 10 (Ints10).